A 122-amino-acid chain; its full sequence is Small ribosomal subunit protein uS13 (122 aa).

The interval 97-122 (PVRGQRTKTNARTRKGPARTVAGKKK) is disordered.

The protein belongs to the universal ribosomal protein uS13 family. As to quaternary structure, part of the 30S ribosomal subunit. Forms a loose heterodimer with protein S19. Forms two bridges to the 50S subunit in the 70S ribosome.

Its function is as follows. Located at the top of the head of the 30S subunit, it contacts several helices of the 16S rRNA. In the 70S ribosome it contacts the 23S rRNA (bridge B1a) and protein L5 of the 50S subunit (bridge B1b), connecting the 2 subunits; these bridges are implicated in subunit movement. Contacts the tRNAs in the A and P-sites. This chain is Small ribosomal subunit protein uS13, found in Geobacter sulfurreducens (strain ATCC 51573 / DSM 12127 / PCA).